A 278-amino-acid chain; its full sequence is Ankyrin repeat and SOCS box protein 13 (278 aa).

6 ANK repeats span residues 18–47 (VERT…CVNQ), 51–80 (DSIT…QVDA), 84–113 (DGST…KVNP), 116–145 (YTAS…NLEA), 149–178 (HFGT…NVNA), and 181–210 (LHET…NIYA). The SOCS box domain occupies 229–278 (AKCFEYYEKTPLSLSQLCRVSLRKATGVRGLEKVAKLNIPPRLIDYLSYN).

It belongs to the ankyrin SOCS box (ASB) family.

It functions in the pathway protein modification; protein ubiquitination. In terms of biological role, may be a substrate-recognition component of a SCF-like ECS (Elongin-Cullin-SOCS-box protein) E3 ubiquitin-protein ligase complex which mediates the ubiquitination and subsequent proteasomal degradation of target proteins. This chain is Ankyrin repeat and SOCS box protein 13 (Asb13), found in Mus musculus (Mouse).